The sequence spans 55 residues: Sec-independent protein translocase protein TatA (55 aa).

The helical transmembrane segment at 1–21 (MGMSFSHLLIVLLIIFVLFGA) threads the bilayer.

The protein belongs to the TatA/E family. In terms of assembly, the Tat system comprises two distinct complexes: a TatABC complex, containing multiple copies of TatA, TatB and TatC subunits, and a separate TatA complex, containing only TatA subunits. Substrates initially bind to the TatABC complex, which probably triggers association of the separate TatA complex to form the active translocon.

Its subcellular location is the cell inner membrane. In terms of biological role, part of the twin-arginine translocation (Tat) system that transports large folded proteins containing a characteristic twin-arginine motif in their signal peptide across membranes. TatA could form the protein-conducting channel of the Tat system. This is Sec-independent protein translocase protein TatA from Rickettsia peacockii (strain Rustic).